The chain runs to 342 residues: S-adenosylmethionine:tRNA ribosyltransferase-isomerase (342 aa).

The protein belongs to the QueA family. Monomer.

Its subcellular location is the cytoplasm. It carries out the reaction 7-aminomethyl-7-carbaguanosine(34) in tRNA + S-adenosyl-L-methionine = epoxyqueuosine(34) in tRNA + adenine + L-methionine + 2 H(+). It participates in tRNA modification; tRNA-queuosine biosynthesis. In terms of biological role, transfers and isomerizes the ribose moiety from AdoMet to the 7-aminomethyl group of 7-deazaguanine (preQ1-tRNA) to give epoxyqueuosine (oQ-tRNA). This is S-adenosylmethionine:tRNA ribosyltransferase-isomerase from Geobacillus kaustophilus (strain HTA426).